The primary structure comprises 215 residues: Octanoyltransferase (215 aa).

Residues 31 to 206 (PDSQDEIWLV…QLVKHLDYAE (176 aa)) enclose the BPL/LPL catalytic domain. Substrate-binding positions include 70-77 (RGGQVTYH), 137-139 (SLG), and 150-152 (GLA). The active-site Acyl-thioester intermediate is the cysteine 168.

The protein belongs to the LipB family.

The protein resides in the cytoplasm. It catalyses the reaction octanoyl-[ACP] + L-lysyl-[protein] = N(6)-octanoyl-L-lysyl-[protein] + holo-[ACP] + H(+). Its pathway is protein modification; protein lipoylation via endogenous pathway; protein N(6)-(lipoyl)lysine from octanoyl-[acyl-carrier-protein]: step 1/2. Catalyzes the transfer of endogenously produced octanoic acid from octanoyl-acyl-carrier-protein onto the lipoyl domains of lipoate-dependent enzymes. Lipoyl-ACP can also act as a substrate although octanoyl-ACP is likely to be the physiological substrate. This chain is Octanoyltransferase, found in Pseudomonas putida (strain W619).